A 444-amino-acid polypeptide reads, in one-letter code: Ras-related protein RabX (444 aa).

Gly29–Asn36 is a GTP binding site. The Effector region motif lies at Leu51–Tyr58. Residue Glu73–Ile77 coordinates GTP. A disordered region spans residues Glu91–Ser136. The span at Asn95–Asn135 shows a compositional bias: low complexity. Asn207–Asn210 contacts GTP. Disordered regions lie at residues Thr213–Ile232 and Leu298–Leu401. Composition is skewed to low complexity over residues Ser217 to Ile232 and Asn303 to Asn399. Cys439 is lipidated: S-palmitoyl cysteine. Position 441 is a cysteine methyl ester (Cys441). Cys441 carries the S-geranylgeranyl cysteine lipid modification. Positions Asn442–Met444 are cleaved as a propeptide — removed in mature form.

This sequence belongs to the small GTPase superfamily. Rab family.

It localises to the cell membrane. The protein is Ras-related protein RabX (rabX) of Dictyostelium discoideum (Social amoeba).